Consider the following 146-residue polypeptide: uncharacterized protein (146 aa).

One can recognise an N-acetyltransferase domain in the interval 7–146; that stretch reads LDINYKTDEL…DGHDVLVWTP (140 aa).

This is an uncharacterized protein from Staphylococcus saprophyticus subsp. saprophyticus (strain ATCC 15305 / DSM 20229 / NCIMB 8711 / NCTC 7292 / S-41).